The chain runs to 231 residues: Ion-translocating oxidoreductase complex subunit E (231 aa).

6 consecutive transmembrane segments (helical) span residues 18–38 (GLVQ…VTNA), 39–59 (LGLG…VSLV), 69–89 (IPVF…LINA), 93–113 (GLYL…VIIG), 128–148 (AFDG…LGAG), and 182–202 (PFLL…LIAG).

This sequence belongs to the NqrDE/RnfAE family. In terms of assembly, the complex is composed of six subunits: RnfA, RnfB, RnfC, RnfD, RnfE and RnfG.

The protein localises to the cell inner membrane. Its function is as follows. Part of a membrane-bound complex that couples electron transfer with translocation of ions across the membrane. In Shewanella denitrificans (strain OS217 / ATCC BAA-1090 / DSM 15013), this protein is Ion-translocating oxidoreductase complex subunit E.